Reading from the N-terminus, the 95-residue chain is Citrate lyase acyl carrier protein (95 aa).

O-(phosphoribosyl dephospho-coenzyme A)serine is present on serine 14.

It belongs to the CitD family. In terms of assembly, oligomer with a subunit composition of (alpha,beta,gamma)6.

It is found in the cytoplasm. Functionally, covalent carrier of the coenzyme of citrate lyase. The protein is Citrate lyase acyl carrier protein of Haemophilus influenzae (strain ATCC 51907 / DSM 11121 / KW20 / Rd).